The sequence spans 512 residues: ATP synthase subunit alpha (512 aa).

Residue 169–176 participates in ATP binding; that stretch reads GDRQTGKT.

Belongs to the ATPase alpha/beta chains family. As to quaternary structure, F-type ATPases have 2 components, CF(1) - the catalytic core - and CF(0) - the membrane proton channel. CF(1) has five subunits: alpha(3), beta(3), gamma(1), delta(1), epsilon(1). CF(0) has three main subunits: a(1), b(2) and c(9-12). The alpha and beta chains form an alternating ring which encloses part of the gamma chain. CF(1) is attached to CF(0) by a central stalk formed by the gamma and epsilon chains, while a peripheral stalk is formed by the delta and b chains.

The protein resides in the cell inner membrane. The catalysed reaction is ATP + H2O + 4 H(+)(in) = ADP + phosphate + 5 H(+)(out). Functionally, produces ATP from ADP in the presence of a proton gradient across the membrane. The alpha chain is a regulatory subunit. This Leptothrix cholodnii (strain ATCC 51168 / LMG 8142 / SP-6) (Leptothrix discophora (strain SP-6)) protein is ATP synthase subunit alpha.